Here is a 596-residue protein sequence, read N- to C-terminus: Elongation factor 4 (596 aa).

In terms of domain architecture, tr-type G spans 2 to 184 (KHIRNFSIIA…VIVAQIPSPE (183 aa)). GTP-binding positions include 14–19 (DHGKST) and 131–134 (NKID).

Belongs to the TRAFAC class translation factor GTPase superfamily. Classic translation factor GTPase family. LepA subfamily.

The protein resides in the cell inner membrane. It carries out the reaction GTP + H2O = GDP + phosphate + H(+). In terms of biological role, required for accurate and efficient protein synthesis under certain stress conditions. May act as a fidelity factor of the translation reaction, by catalyzing a one-codon backward translocation of tRNAs on improperly translocated ribosomes. Back-translocation proceeds from a post-translocation (POST) complex to a pre-translocation (PRE) complex, thus giving elongation factor G a second chance to translocate the tRNAs correctly. Binds to ribosomes in a GTP-dependent manner. In Shewanella sediminis (strain HAW-EB3), this protein is Elongation factor 4.